The following is a 371-amino-acid chain: Repetitive proline-rich cell wall protein 2 (371 aa).

The signal sequence occupies residues 1–22 (MASSNLLVLLLFALFAIPRGLA). A run of 66 repeats spans residues 32-36 (PPVYK), 37-41 (PPVEK), 42-46 (PPVYK), 47-51 (PPVEK), 52-56 (PPVYK), 57-61 (PPVEK), 62-66 (PPVYK), 67-71 (PPVEK), 72-76 (PPVYK), 77-81 (PPVEK), 82-86 (PPVYK), 87-91 (PPVEK), 92-96 (PPVYK), 97-101 (PPVEK), 102-106 (PPVYK), 107-111 (PPVEK), 112-116 (PPVYK), 117-121 (PPVEK), 122-126 (PPVYK), 127-131 (PPVEK), 132-136 (PPVYK), 137-141 (PPVEK), 142-146 (PPVYK), 147-151 (PPVEK), 152-156 (PPVYK), 157-161 (PPVEK), 162-166 (PPVYK), 167-171 (PPVEK), 172-176 (PPVYK), 177-181 (PPVEK), 182-186 (PPVYK), 187-191 (PPVEK), 192-196 (PPVYK), 197-201 (PPVEK), 202-206 (PPVYK), 207-211 (PPVEK), 212-216 (PPVYK), 217-221 (PPVEK), 222-226 (PPVYK), 227-231 (PPVEK), 232-236 (PPIYK), 237-241 (PPVEK), 242-246 (PPVYK), 247-251 (PPVEK), 252-256 (PPVYK), 257-261 (PPVEK), 262-266 (PPIYK), 267-271 (PPVEK), 272-276 (PPVYK), 277-281 (PPVEK), 282-286 (PPVYK), 287-291 (PPVEK), 292-296 (PPVYK), 297-301 (PPVEK), 302-306 (PPVYK), 307-311 (PPVEK), 312-316 (PPVYK), 317-321 (PPVYK), 322-326 (PPVYK), 327-331 (PPVEK), 332-336 (PPVYK), 337-341 (PPVYK), 342-346 (PPVEK), 347-351 (PPVYK), 352-356 (PPVYK), and 357-361 (PPVEK). The interval 32–366 (PPVYKPPVEK…PPVEKPPVYG (335 aa)) is 67 X 5 AA approximate tandem repeats of P-P-[IV]-[EY]-K. A disordered region spans residues 49–317 (VEKPPVYKPP…PVEKPPVYKP (269 aa)). Positions 339 to 371 (VYKPPVEKPPVYKPPVYKPPVEKPPVYGPPHHP) are disordered. Residues 362–366 (PPVYG) form a 67; approximate repeat.

The protein belongs to the plant proline-rich protein superfamily. ENOD12 family. Expressed in hypocotyls, roots and mature root nodules.

The protein resides in the secreted. It localises to the cell wall. This is a developmentally regulated putative cell wall protein. The chain is Repetitive proline-rich cell wall protein 2 (PRP2) from Medicago truncatula (Barrel medic).